A 582-amino-acid chain; its full sequence is ATP-dependent lipid A-core flippase (582 aa).

5 helical membrane passes run 16–36 (LWPTIAPFKAGLIVAGVALIL), 64–84 (LMWMPLVVIGLMILRGITSYI), 153–173 (IIGLFIMMFYYSWQLSIILIV), 253–273 (PIIQLIASLALAFVLYAASFP), and 275–295 (VMDSLTAGTITVVFSSMIALM). Positions 28–310 (IVAGVALILN…LTNVNAQFQR (283 aa)) constitute an ABC transmembrane type-1 domain. An ABC transporter domain is found at 342 to 578 (VEFRNVTFTY…RGVYAQLHKM (237 aa)). An ATP-binding site is contributed by 376–383 (GRSGSGKS).

Belongs to the ABC transporter superfamily. Lipid exporter (TC 3.A.1.106) family. In terms of assembly, homodimer.

It is found in the cell inner membrane. It carries out the reaction ATP + H2O + lipid A-core oligosaccharideSide 1 = ADP + phosphate + lipid A-core oligosaccharideSide 2.. In terms of biological role, involved in lipopolysaccharide (LPS) biosynthesis. Translocates lipid A-core from the inner to the outer leaflet of the inner membrane. Transmembrane domains (TMD) form a pore in the inner membrane and the ATP-binding domain (NBD) is responsible for energy generation. The polypeptide is ATP-dependent lipid A-core flippase (Escherichia coli O6:K15:H31 (strain 536 / UPEC)).